Here is a 120-residue protein sequence, read N- to C-terminus: Putative ferric transport system permease-like protein AfuB (120 aa).

The Cytoplasmic segment spans residues 1-38 (MESLPGQIDKSLDEASLSLRAGSLRTITHILLPLLRPA). The ABC transmembrane type-1 domain maps to 1 to 102 (MESLPGQIDK…VVMLAIIFIF (102 aa)). The helical transmembrane segment at 39–59 (ILSALIYSFVRAITTVSAIVF) threads the bilayer. The Periplasmic portion of the chain corresponds to 60–81 (LVTPDTRVATAYILNRVEDGEY). The chain crosses the membrane as a helical span at residues 82 to 102 (GVAIAYGSILIVVMLAIIFIF). Topologically, residues 103 to 120 (DWLIGESRTSRSKAKNQA) are cytoplasmic.

Belongs to the binding-protein-dependent transport system permease family. FbpB subfamily.

It localises to the cell inner membrane. In terms of biological role, a severely truncated paralog of the AfuB uptake protein, homologous only to the last 20% of the intact protein in Actinobacillus. This is Putative ferric transport system permease-like protein AfuB (afuB) from Escherichia coli (strain K12).